We begin with the raw amino-acid sequence, 307 residues long: Aspartate carbamoyltransferase catalytic subunit (307 aa).

The carbamoyl phosphate site is built by Arg-54 and Thr-55. Lys-83 is a binding site for L-aspartate. Residues Arg-104, His-132, and Gln-135 each coordinate carbamoyl phosphate. L-aspartate is bound by residues Arg-165 and Arg-228. Leu-267 and Pro-268 together coordinate carbamoyl phosphate.

The protein belongs to the aspartate/ornithine carbamoyltransferase superfamily. ATCase family. In terms of assembly, heterododecamer (2C3:3R2) of six catalytic PyrB chains organized as two trimers (C3), and six regulatory PyrI chains organized as three dimers (R2).

It carries out the reaction carbamoyl phosphate + L-aspartate = N-carbamoyl-L-aspartate + phosphate + H(+). Its pathway is pyrimidine metabolism; UMP biosynthesis via de novo pathway; (S)-dihydroorotate from bicarbonate: step 2/3. Its function is as follows. Catalyzes the condensation of carbamoyl phosphate and aspartate to form carbamoyl aspartate and inorganic phosphate, the committed step in the de novo pyrimidine nucleotide biosynthesis pathway. In Clostridium perfringens (strain 13 / Type A), this protein is Aspartate carbamoyltransferase catalytic subunit.